Consider the following 347-residue polypeptide: tRNA N6-adenosine threonylcarbamoyltransferase (347 aa).

Residues His111 and His115 each contribute to the Fe cation site. Substrate-binding positions include 134-138 (LVSGG), Asp167, Gly180, and Asn276. Asp304 contacts Fe cation.

The protein belongs to the KAE1 / TsaD family. Fe(2+) serves as cofactor.

The protein localises to the cytoplasm. It catalyses the reaction L-threonylcarbamoyladenylate + adenosine(37) in tRNA = N(6)-L-threonylcarbamoyladenosine(37) in tRNA + AMP + H(+). Its function is as follows. Required for the formation of a threonylcarbamoyl group on adenosine at position 37 (t(6)A37) in tRNAs that read codons beginning with adenine. Is involved in the transfer of the threonylcarbamoyl moiety of threonylcarbamoyl-AMP (TC-AMP) to the N6 group of A37, together with TsaE and TsaB. TsaD likely plays a direct catalytic role in this reaction. The sequence is that of tRNA N6-adenosine threonylcarbamoyltransferase from Nitrosospira multiformis (strain ATCC 25196 / NCIMB 11849 / C 71).